We begin with the raw amino-acid sequence, 374 residues long: tRNA 2-selenouridine synthase (374 aa).

In terms of domain architecture, Rhodanese spans 12–136 (FLRDVPMLDT…MRGFLLQTID (125 aa)). The active-site S-selanylcysteine intermediate is C95.

This sequence belongs to the SelU family. In terms of assembly, monomer.

It catalyses the reaction 5-methylaminomethyl-2-thiouridine(34) in tRNA + selenophosphate + (2E)-geranyl diphosphate + H2O + H(+) = 5-methylaminomethyl-2-selenouridine(34) in tRNA + (2E)-thiogeraniol + phosphate + diphosphate. The enzyme catalyses 5-methylaminomethyl-2-thiouridine(34) in tRNA + (2E)-geranyl diphosphate = 5-methylaminomethyl-S-(2E)-geranyl-thiouridine(34) in tRNA + diphosphate. The catalysed reaction is 5-methylaminomethyl-S-(2E)-geranyl-thiouridine(34) in tRNA + selenophosphate + H(+) = 5-methylaminomethyl-2-(Se-phospho)selenouridine(34) in tRNA + (2E)-thiogeraniol. It carries out the reaction 5-methylaminomethyl-2-(Se-phospho)selenouridine(34) in tRNA + H2O = 5-methylaminomethyl-2-selenouridine(34) in tRNA + phosphate. Involved in the post-transcriptional modification of the uridine at the wobble position (U34) of tRNA(Lys), tRNA(Glu) and tRNA(Gln). Catalyzes the conversion of 2-thiouridine (S2U-RNA) to 2-selenouridine (Se2U-RNA). Acts in a two-step process involving geranylation of 2-thiouridine (S2U) to S-geranyl-2-thiouridine (geS2U) and subsequent selenation of the latter derivative to 2-selenouridine (Se2U) in the tRNA chain. This Bordetella petrii (strain ATCC BAA-461 / DSM 12804 / CCUG 43448) protein is tRNA 2-selenouridine synthase.